Consider the following 344-residue polypeptide: Arginine N-succinyltransferase (344 aa).

Leu125 lines the succinyl-CoA pocket. His229 serves as the catalytic Proton donor.

Belongs to the arginine N-succinyltransferase family.

The enzyme catalyses succinyl-CoA + L-arginine = N(2)-succinyl-L-arginine + CoA + H(+). It functions in the pathway amino-acid degradation; L-arginine degradation via AST pathway; L-glutamate and succinate from L-arginine: step 1/5. Its function is as follows. Catalyzes the transfer of succinyl-CoA to arginine to produce N(2)-succinylarginine. The chain is Arginine N-succinyltransferase from Enterobacter sp. (strain 638).